We begin with the raw amino-acid sequence, 149 residues long: Large ribosomal subunit protein bL9 (149 aa).

It belongs to the bacterial ribosomal protein bL9 family.

In terms of biological role, binds to the 23S rRNA. The sequence is that of Large ribosomal subunit protein bL9 from Xylella fastidiosa (strain M23).